Here is a 652-residue protein sequence, read N- to C-terminus: DNA ligase (652 aa).

NAD(+)-binding positions include 30 to 34 (DEVYD), 79 to 80 (SL), and E108. Residue K110 is the N6-AMP-lysine intermediate of the active site. Positions 131, 165, 280, and 304 each coordinate NAD(+). Zn(2+) contacts are provided by C398, C401, C414, and C419. A BRCT domain is found at 574–652 (AKENPFKGKS…DEMRSKIEQA (79 aa)).

It belongs to the NAD-dependent DNA ligase family. LigA subfamily. The cofactor is Mg(2+). It depends on Mn(2+) as a cofactor.

The catalysed reaction is NAD(+) + (deoxyribonucleotide)n-3'-hydroxyl + 5'-phospho-(deoxyribonucleotide)m = (deoxyribonucleotide)n+m + AMP + beta-nicotinamide D-nucleotide.. Its function is as follows. DNA ligase that catalyzes the formation of phosphodiester linkages between 5'-phosphoryl and 3'-hydroxyl groups in double-stranded DNA using NAD as a coenzyme and as the energy source for the reaction. It is essential for DNA replication and repair of damaged DNA. This chain is DNA ligase, found in Sulfurimonas denitrificans (strain ATCC 33889 / DSM 1251) (Thiomicrospira denitrificans (strain ATCC 33889 / DSM 1251)).